The following is a 395-amino-acid chain: MTDSNRWLLPEGIEEALPPLAERLETCRRQLLDLYHRWGYELVMPPMIEYLESLLTGTGSDLDLQTFKLTDQLNGRLMGVRADMTPQVARIDAHSLNRDVPTRLCYMGTVLHTRPDGFAGSRSPMQVGAELYGHKGLDSDVETIRLMLETFRVCGVGNIFLDLGHVDIYRSLAADAGLTADDEAQLFDMLQRKALPEIRAFLNGLDAPAEVRERLLALGELNGDTAVLDEARRLLAGAGERVVRALDELSAIAGAVQRLYPEVRLHVDLSELRGFHYHTGAVFAAYVPGHGQELARGGRYDDIGRVFGRARPATGFSTDLKTLVRLSGQPLAAAPRGIFAPADPDPALLDAVAELRSRGERVIQGLAGQGGDAAAMGCDRVLARDSKHQWTVTDL.

This sequence belongs to the class-II aminoacyl-tRNA synthetase family. HisZ subfamily. Heteromultimer composed of HisG and HisZ subunits.

Its subcellular location is the cytoplasm. Its pathway is amino-acid biosynthesis; L-histidine biosynthesis; L-histidine from 5-phospho-alpha-D-ribose 1-diphosphate: step 1/9. In terms of biological role, required for the first step of histidine biosynthesis. May allow the feedback regulation of ATP phosphoribosyltransferase activity by histidine. This Thioalkalivibrio sulfidiphilus (strain HL-EbGR7) protein is ATP phosphoribosyltransferase regulatory subunit.